The sequence spans 250 residues: 5'/3'-nucleotidase SurE (250 aa).

Residues Asp8, Asp9, Ser39, and Asn92 each contribute to the a divalent metal cation site.

Belongs to the SurE nucleotidase family. It depends on a divalent metal cation as a cofactor.

Its subcellular location is the cytoplasm. It catalyses the reaction a ribonucleoside 5'-phosphate + H2O = a ribonucleoside + phosphate. The enzyme catalyses a ribonucleoside 3'-phosphate + H2O = a ribonucleoside + phosphate. The catalysed reaction is [phosphate](n) + H2O = [phosphate](n-1) + phosphate + H(+). Its function is as follows. Nucleotidase with a broad substrate specificity as it can dephosphorylate various ribo- and deoxyribonucleoside 5'-monophosphates and ribonucleoside 3'-monophosphates with highest affinity to 3'-AMP. Also hydrolyzes polyphosphate (exopolyphosphatase activity) with the preference for short-chain-length substrates (P20-25). Might be involved in the regulation of dNTP and NTP pools, and in the turnover of 3'-mononucleotides produced by numerous intracellular RNases (T1, T2, and F) during the degradation of various RNAs. The protein is 5'/3'-nucleotidase SurE of Wigglesworthia glossinidia brevipalpis.